Here is a 36-residue protein sequence, read N- to C-terminus: Photosystem I reaction center subunit VIII (36 aa).

A helical membrane pass occupies residues 7-29; it reads PSILVPLVGILLPAVTMASLFLY.

The protein belongs to the PsaI family.

The protein resides in the plastid. It is found in the chloroplast thylakoid membrane. Its function is as follows. May help in the organization of the PsaL subunit. This chain is Photosystem I reaction center subunit VIII, found in Adiantum capillus-veneris (Maidenhair fern).